We begin with the raw amino-acid sequence, 502 residues long: 1-aminocyclopropane-1-carboxylate synthase-like protein 1 (502 aa).

A disordered region spans residues 1 to 24 (MFCLPQQESTAPTTCTGSASTQDM). Glu106 contacts substrate. Position 324 is an N6-(pyridoxal phosphate)lysine (Lys324).

The protein belongs to the class-I pyridoxal-phosphate-dependent aminotransferase family.

Functionally, does not catalyze the synthesis of 1-aminocyclopropane-1-carboxylate but is capable of catalyzing the deamination of L-vinylglycine. This Mus musculus (Mouse) protein is 1-aminocyclopropane-1-carboxylate synthase-like protein 1 (Accs).